Consider the following 110-residue polypeptide: Protein NATD1 (110 aa).

An N-acetyltransferase domain is found at 19 to 109 (EHDRQRRQFS…PLPQYLERLQ (91 aa)).

It belongs to the NATD1 family. As to expression, expressed in the heart, testis, kidney and lung.

The sequence is that of Protein NATD1 (Natd1) from Mus musculus (Mouse).